The chain runs to 325 residues: ATP phosphoribosyltransferase (325 aa).

Belongs to the ATP phosphoribosyltransferase family. Long subfamily. It depends on Mg(2+) as a cofactor.

It is found in the cytoplasm. It carries out the reaction 1-(5-phospho-beta-D-ribosyl)-ATP + diphosphate = 5-phospho-alpha-D-ribose 1-diphosphate + ATP. Its pathway is amino-acid biosynthesis; L-histidine biosynthesis; L-histidine from 5-phospho-alpha-D-ribose 1-diphosphate: step 1/9. With respect to regulation, feedback inhibited by histidine. In terms of biological role, catalyzes the condensation of ATP and 5-phosphoribose 1-diphosphate to form N'-(5'-phosphoribosyl)-ATP (PR-ATP). Has a crucial role in the pathway because the rate of histidine biosynthesis seems to be controlled primarily by regulation of HisG enzymatic activity. In Rhodopseudomonas palustris (strain BisB18), this protein is ATP phosphoribosyltransferase.